Reading from the N-terminus, the 282-residue chain is Acetyl-coenzyme A carboxylase carboxyl transferase subunit beta (282 aa).

The CoA carboxyltransferase N-terminal domain maps to 26–282 (QWVKCPETGE…IIRLLNLLME (257 aa)).

Belongs to the AccD/PCCB family. In terms of assembly, acetyl-CoA carboxylase is a heterohexamer composed of biotin carboxyl carrier protein (AccB), biotin carboxylase (AccC) and two subunits each of ACCase subunit alpha (AccA) and ACCase subunit beta (AccD).

The protein resides in the cytoplasm. It carries out the reaction N(6)-carboxybiotinyl-L-lysyl-[protein] + acetyl-CoA = N(6)-biotinyl-L-lysyl-[protein] + malonyl-CoA. It functions in the pathway lipid metabolism; malonyl-CoA biosynthesis; malonyl-CoA from acetyl-CoA: step 1/1. In terms of biological role, component of the acetyl coenzyme A carboxylase (ACC) complex. Biotin carboxylase (BC) catalyzes the carboxylation of biotin on its carrier protein (BCCP) and then the CO(2) group is transferred by the transcarboxylase to acetyl-CoA to form malonyl-CoA. This Salinibacter ruber (strain DSM 13855 / M31) protein is Acetyl-coenzyme A carboxylase carboxyl transferase subunit beta.